Reading from the N-terminus, the 491-residue chain is Trigger factor (491 aa).

One can recognise a PPIase FKBP-type domain in the interval 173-260 (GDVAVVSFSG…LDELKGRELP (88 aa)). The segment at 435–491 (MVDPASEDKPAKASKAKSSKAKAEKEPAAEGQAKAKPAAKTSKSKTKAAEKLITPID) is disordered. Residues 463–475 (AEGQAKAKPAAKT) are compositionally biased toward low complexity.

Belongs to the FKBP-type PPIase family. Tig subfamily.

It localises to the cytoplasm. The catalysed reaction is [protein]-peptidylproline (omega=180) = [protein]-peptidylproline (omega=0). Involved in protein export. Acts as a chaperone by maintaining the newly synthesized protein in an open conformation. Functions as a peptidyl-prolyl cis-trans isomerase. In Synechococcus sp. (strain RCC307), this protein is Trigger factor.